The following is a 161-amino-acid chain: MAIPSNLMQFSEDIIKQLTPEEIDEFREAFMMFDKDGNGTISTKELGIAMRSLGQNPTEQEILEMINEVDIDGNGQIEFPEFCVMMKRMMKETDSEMIREAFRVFDKDGNGVITAQEFRYFMVHMGMQFSEEEVDEMIKEVDVDGDGEIDYEEFVKMMSNQ.

EF-hand domains lie at 21–56 (EEID…LGQN), 57–92 (PTEQ…MMKE), 93–128 (TDSE…MGMQ), and 129–161 (FSEE…MSNQ). Ca(2+) contacts are provided by Asp-34, Asp-36, Asn-38, Thr-40, Glu-45, Asp-70, Asp-72, Asn-74, Gln-76, Glu-81, Asp-106, Asp-108, Asn-110, Glu-117, Asp-142, Asp-144, Asp-146, Glu-148, and Glu-153.

Belongs to the calmodulin family.

Its function is as follows. This protein resembles calmodulin in sequence but possibly resembles troponin C in function. This Caenorhabditis elegans protein is Calmodulin-like protein (cal-1).